Consider the following 452-residue polypeptide: GPI mannosyltransferase 2 (452 aa).

Topologically, residues 1 to 7 (MMEKVTK) are cytoplasmic. A helical membrane pass occupies residues 8–28 (LALTSRVMVLVVQLLANFATP). The Lumenal segment spans residues 29–113 (DHKPDVFRMP…HLGIPLSRDA (85 aa)). The chain crosses the membrane as a helical span at residues 114–134 (LILLVAVALNVLIFCKTANVL). Over 135 to 161 (YKLTQRMFNDHNKSWNAALIFCFNPAS) the chain is Cytoplasmic. The chain crosses the membrane as a helical span at residues 162-182 (IFFSAAYSETFFAFASFSLML). Residues 183–209 (ECMRSEKDFRTFRLGAALTGCFVCRSN) are Lumenal-facing. A helical membrane pass occupies residues 210–230 (GLLTLGFPLYFLARHILLSTG). The Cytoplasmic portion of the chain corresponds to 231 to 238 (SVQRCWQL). A helical membrane pass occupies residues 239–259 (FKMGLAMLVALGILHTYYFYI). Over 260–284 (YRLYCLPDVKVQHAQHVVDYAKERS) the chain is Lumenal. The helical transmembrane segment at 285-305 (FLISGQASVGSPWCGYTLPFP) threads the bilayer. The Cytoplasmic segment spans residues 306–327 (YTYVQSHYWDVGFLRYYKWKQL). A helical membrane pass occupies residues 328–348 (PNFLLALPMLLFMHWHCYDYI). Over 349–370 (RKLVANTWSKISPSEYQGILKE) the chain is Lumenal. The helical transmembrane segment at 371-391 (HISFPFVLHAAVLTLVCTLYV) threads the bilayer. At 392–398 (HIQVSTR) the chain is on the cytoplasmic side. Residues 399–419 (LLASATPVFYWFAADYMPNTF) traverse the membrane as a helical segment. At 420–426 (QLSFRSK) the chain is on the lumenal side. Residues 427-447 (AGVLFIWCLTYSLVGTVLFSN) form a helical membrane-spanning segment. Residues 448 to 452 (NYPWT) lie on the Cytoplasmic side of the membrane.

This sequence belongs to the PIGV family.

It is found in the endoplasmic reticulum membrane. Its pathway is glycolipid biosynthesis; glycosylphosphatidylinositol-anchor biosynthesis. Mannosyltransferase involved in glycosylphosphatidylinositol-anchor biosynthesis. Transfers the second mannose to the glycosylphosphatidylinositol during GPI precursor assembly. Required for the GPI-mediated endoplasmic reticulum exit and proper targeting to the cell surface of chp. Required for GPI-mediated membrane attachment of chp, qsm and Cont. Essential for microvillar stability in the rhabdomere. The protein is GPI mannosyltransferase 2 of Drosophila pseudoobscura pseudoobscura (Fruit fly).